Reading from the N-terminus, the 142-residue chain is Protein archease (142 aa).

D12 and D141 together coordinate Ca(2+).

It belongs to the archease family.

Its function is as follows. Activates the tRNA-splicing ligase complex by facilitating the enzymatic turnover of catalytic subunit RtcB. Acts by promoting the guanylylation of RtcB, a key intermediate step in tRNA ligation. Can also alter the NTP specificity of RtcB such that ATP, dGTP or ITP is used efficiently. The chain is Protein archease from Thermococcus kodakarensis (strain ATCC BAA-918 / JCM 12380 / KOD1) (Pyrococcus kodakaraensis (strain KOD1)).